The primary structure comprises 74 residues: Mucroporin (74 aa).

Residues 1 to 22 (MKVKFLLAVFLIVLVVTDHCHA) form the signal peptide. Lys-39 carries the lysine amide modification. A propeptide spanning residues 45-74 (QMEARFEPQNRNYRKRELDLEKLFANMPDY) is cleaved from the precursor.

The protein belongs to the non-disulfide-bridged peptide (NDBP) superfamily. Short antimicrobial peptide (group 4) family. As to expression, expressed by the venom gland.

It is found in the secreted. Its subcellular location is the target cell membrane. Mucroporin: cationic host defense peptide that have antibacterial activity by breaking membranes. Is more effective on Gram-positive than on Gram-negative bacteria. Minimum inhibitory concentrations (MIC) are the following: MIC=&gt;100 ug/ml against E.coli AB94012, MIC=&gt;100 ug/ml against P.aeruginosa AB93066, MIC=25 ug/ml against B.thuringiensis AB92037, MIC=50 ug/ml against B.subtilis AB91021, MIC=25 ug/ml against S.aureus AB94004, and MIC=25 ug/ml against the methicillin-resistant coagulase-negative Staphylococcus. Its synthetic analog mucroporin-M1 is more effective. Does not show antiviral activity against any of measles, SARS-CoV, influenza H5N1, hepatitis B and HIV-1 viruses. In terms of biological role, mutant mucroporin-M1: can inhibit Gram-positive bacteria at low concentrations and antibiotic-resistant pathogens. Minimum inhibitory concentrations (MIC) are the following: MIC=12.5 ug/ml against E.coli AB94012, MIC=100 ug/ml against P.aeruginosa AB93066, MIC=25 ug/ml against B.thuringiensis AB92037, MIC=25 ug/ml against B.subtilis AB91021, MIC=5 ug/ml against S.aureus AB94004, and MIC=5 ug/ml against the methicillin-resistant coagulase-negative Staphylococcus. Also shows antiviral activities against measles (EC(50) of 7.15 ug/ml), SARS-CoV (EC(50) of 14.46 ug/ml), influenza H5N1 viruses (EC(50) of 2.10 mug/ml), HIV-1, and hepatitis B virus. The protein is Mucroporin of Lychas mucronatus (Chinese swimming scorpion).